A 454-amino-acid chain; its full sequence is Probable DNA primase large subunit (454 aa).

Positions 280, 359, 375, and 415 each coordinate [4Fe-4S] cluster.

Belongs to the eukaryotic-type primase large subunit family. Heterodimer of a small subunit and a large subunit. [4Fe-4S] cluster serves as cofactor.

DNA primase is the polymerase that synthesizes small RNA primers for the Okazaki fragments made during discontinuous DNA replication. The sequence is that of Probable DNA primase large subunit from Arabidopsis thaliana (Mouse-ear cress).